The primary structure comprises 882 residues: Exo-beta-D-glucosaminidase ARB_07888 (882 aa).

The first 21 residues, 1-21 (MWFVFRPAAIPALLLTLGVSA), serve as a signal peptide directing secretion. Positions 22-31 (LSPLRPLVST) are excised as a propeptide. N-linked (GlcNAc...) asparagine glycans are attached at residues asparagine 86, asparagine 200, asparagine 234, asparagine 237, asparagine 287, and asparagine 442. Residue aspartate 466 is the Proton donor of the active site. The active-site Nucleophile is glutamate 538. Asparagine 688, asparagine 773, and asparagine 816 each carry an N-linked (GlcNAc...) asparagine glycan.

The protein belongs to the glycosyl hydrolase 2 family. Monomer.

It is found in the secreted. It catalyses the reaction Hydrolysis of chitosan or chitosan oligosaccharides to remove successive D-glucosamine residues from the non-reducing termini.. Hydrolyzes chitosan and chitooligosaccharides with retention of anomeric configuration. This chain is Exo-beta-D-glucosaminidase ARB_07888, found in Arthroderma benhamiae (strain ATCC MYA-4681 / CBS 112371) (Trichophyton mentagrophytes).